Consider the following 278-residue polypeptide: 4-deoxy-L-threo-5-hexosulose-uronate ketol-isomerase (278 aa).

Residues His196, His198, Glu203, and His245 each coordinate Zn(2+).

The protein belongs to the KduI family. Zn(2+) is required as a cofactor.

It carries out the reaction 5-dehydro-4-deoxy-D-glucuronate = 3-deoxy-D-glycero-2,5-hexodiulosonate. Its pathway is glycan metabolism; pectin degradation; 2-dehydro-3-deoxy-D-gluconate from pectin: step 4/5. Catalyzes the isomerization of 5-dehydro-4-deoxy-D-glucuronate to 3-deoxy-D-glycero-2,5-hexodiulosonate. The sequence is that of 4-deoxy-L-threo-5-hexosulose-uronate ketol-isomerase from Shigella boydii serotype 4 (strain Sb227).